The chain runs to 186 residues: Peptidyl-tRNA hydrolase (186 aa).

TRNA is bound at residue tyrosine 16. The Proton acceptor role is filled by histidine 21. The tRNA site is built by tyrosine 66, asparagine 68, and asparagine 114.

This sequence belongs to the PTH family. In terms of assembly, monomer.

Its subcellular location is the cytoplasm. It catalyses the reaction an N-acyl-L-alpha-aminoacyl-tRNA + H2O = an N-acyl-L-amino acid + a tRNA + H(+). Functionally, hydrolyzes ribosome-free peptidyl-tRNAs (with 1 or more amino acids incorporated), which drop off the ribosome during protein synthesis, or as a result of ribosome stalling. Catalyzes the release of premature peptidyl moieties from peptidyl-tRNA molecules trapped in stalled 50S ribosomal subunits, and thus maintains levels of free tRNAs and 50S ribosomes. This is Peptidyl-tRNA hydrolase from Ureaplasma urealyticum serovar 10 (strain ATCC 33699 / Western).